Here is a 302-residue protein sequence, read N- to C-terminus: Putative S-adenosyl-L-methionine-dependent methyltransferase MAV_2803 (302 aa).

Residues D129 and 158–159 (DL) contribute to the S-adenosyl-L-methionine site.

This sequence belongs to the UPF0677 family.

Exhibits S-adenosyl-L-methionine-dependent methyltransferase activity. The sequence is that of Putative S-adenosyl-L-methionine-dependent methyltransferase MAV_2803 from Mycobacterium avium (strain 104).